The primary structure comprises 313 residues: WUSCHEL-related homeobox 5 (313 aa).

The tract at residues 1-32 is disordered; it reads METTTTTLGGGGGGRAGGFSDPPSPLSPPLSP. Residues 8–17 show a composition bias toward gly residues; sequence LGGGGGGRAG. Positions 22 to 31 are enriched in pro residues; sequence PPSPLSPPLS. The segment at residues 40-104 is a DNA-binding region (homeobox; WUS-type); sequence LANARWTPTK…NHKARQRQKQ (65 aa). Disordered stretches follow at residues 224-247 and 271-313; these read AAGRGAAEAEGHGRRGGGAGGRET and CAAV…SGGR. Positions 271-301 are enriched in low complexity; the sequence is CAAVSPTTPSASASFSWESESSDSPSSEAPP.

The protein belongs to the WUS homeobox family.

It is found in the nucleus. In terms of biological role, transcription factor which may be involved in developmental processes. This is WUSCHEL-related homeobox 5 (WOX5) from Oryza sativa subsp. japonica (Rice).